A 315-amino-acid polypeptide reads, in one-letter code: Olfactory receptor 4A8 (315 aa).

Topologically, residues 1 to 24 are extracellular; it reads MRQNNNITEFVLLGFSQYPDVQNA. A glycan (N-linked (GlcNAc...) asparagine) is linked at N6. The chain crosses the membrane as a helical span at residues 25–45; that stretch reads LFVMFLLIYIVTMVGNLLIVV. At 46–57 the chain is on the cytoplasmic side; sequence SIIASPFLGSPV. A helical transmembrane segment spans residues 58–80; the sequence is YFFLACLSFIDAVYSTTISPVLI. Residues 81 to 95 lie on the Extracellular side of the membrane; that stretch reads VDLLCDKKTISFPAC. C95 and C177 are joined by a disulfide. The helical transmembrane segment at 96–116 threads the bilayer; sequence MGQLFIEHLFGDTDVFLLVVM. The Cytoplasmic portion of the chain corresponds to 117 to 139; sequence AYDRYVATCKPLRYLTIMNRQVC. The chain crosses the membrane as a helical span at residues 140-160; sequence ILLLVVAVTGGFLHSVFQILV. At 161-193 the chain is on the extracellular side; that stretch reads VYSLPFCGPNVIYHFFCNIYPLLDLECTDTYFV. The chain crosses the membrane as a helical span at residues 194-214; sequence GLAVVFNGGAICMVIFTLLLI. Over 215-235 the chain is Cytoplasmic; that stretch reads SYGVILNSLKTYSPEGRHKAP. Residues 236 to 256 traverse the membrane as a helical segment; it reads FICSSHFIMVILFFVPCIFLY. The Extracellular portion of the chain corresponds to 257–266; that stretch reads VRPVSNFPID. A helical membrane pass occupies residues 267–287; that stretch reads KFLTVFYSVITPKLNPFIYML. Over 288-315 the chain is Cytoplasmic; that stretch reads RNSEMRNAIENLLGYQSGKTGFRCSKLN.

The protein belongs to the G-protein coupled receptor 1 family.

Its subcellular location is the cell membrane. Odorant receptor. In Homo sapiens (Human), this protein is Olfactory receptor 4A8 (OR4A8).